A 358-amino-acid polypeptide reads, in one-letter code: Phospho-N-acetylmuramoyl-pentapeptide-transferase (358 aa).

Helical transmembrane passes span R25 to I45, T73 to L93, Y97 to Y117, M134 to M154, Y172 to T192, G197 to A217, G233 to W253, V261 to I281, M286 to V306, and K335 to L355.

The protein belongs to the glycosyltransferase 4 family. MraY subfamily. Requires Mg(2+) as cofactor.

Its subcellular location is the cell inner membrane. It carries out the reaction UDP-N-acetyl-alpha-D-muramoyl-L-alanyl-gamma-D-glutamyl-meso-2,6-diaminopimeloyl-D-alanyl-D-alanine + di-trans,octa-cis-undecaprenyl phosphate = di-trans,octa-cis-undecaprenyl diphospho-N-acetyl-alpha-D-muramoyl-L-alanyl-D-glutamyl-meso-2,6-diaminopimeloyl-D-alanyl-D-alanine + UMP. Its pathway is cell wall biogenesis; peptidoglycan biosynthesis. Catalyzes the initial step of the lipid cycle reactions in the biosynthesis of the cell wall peptidoglycan: transfers peptidoglycan precursor phospho-MurNAc-pentapeptide from UDP-MurNAc-pentapeptide onto the lipid carrier undecaprenyl phosphate, yielding undecaprenyl-pyrophosphoryl-MurNAc-pentapeptide, known as lipid I. The protein is Phospho-N-acetylmuramoyl-pentapeptide-transferase of Geobacter sulfurreducens (strain ATCC 51573 / DSM 12127 / PCA).